The primary structure comprises 260 residues: NH(3)-dependent NAD(+) synthetase (260 aa).

31–38 (GLSGGLDS) contacts ATP. Asp37 is a binding site for Mg(2+). Arg112 provides a ligand contact to deamido-NAD(+). Residue Thr132 participates in ATP binding. Glu137 contributes to the Mg(2+) binding site. ATP contacts are provided by Lys161 and Ser183.

This sequence belongs to the NAD synthetase family. In terms of assembly, homodimer.

It catalyses the reaction deamido-NAD(+) + NH4(+) + ATP = AMP + diphosphate + NAD(+) + H(+). It functions in the pathway cofactor biosynthesis; NAD(+) biosynthesis; NAD(+) from deamido-NAD(+) (ammonia route): step 1/1. Functionally, catalyzes the ATP-dependent amidation of deamido-NAD to form NAD. Uses ammonia as a nitrogen source. The protein is NH(3)-dependent NAD(+) synthetase of Helicobacter pylori (strain HPAG1).